Reading from the N-terminus, the 215-residue chain is UPF0502 protein YceH (215 aa).

The protein belongs to the UPF0502 family.

The polypeptide is UPF0502 protein YceH (Salmonella arizonae (strain ATCC BAA-731 / CDC346-86 / RSK2980)).